We begin with the raw amino-acid sequence, 158 residues long: Ribosome maturation factor RimP (158 aa).

The protein belongs to the RimP family.

The protein resides in the cytoplasm. In terms of biological role, required for maturation of 30S ribosomal subunits. The protein is Ribosome maturation factor RimP of Pseudomonas putida (strain ATCC 47054 / DSM 6125 / CFBP 8728 / NCIMB 11950 / KT2440).